The sequence spans 482 residues: tRNA sulfurtransferase (482 aa).

Positions 61-165 constitute a THUMP domain; sequence QQVLEILTTT…DDKLNQILAH (105 aa). Residues 183–184, K265, G287, and Q296 contribute to the ATP site; that span reads LI. Residues C344 and C456 are joined by a disulfide bond. The region spanning 404-482 is the Rhodanese domain; sequence IEEHAVVLDI…GFNNVKVYRP (79 aa). Catalysis depends on C456, which acts as the Cysteine persulfide intermediate.

The protein belongs to the ThiI family.

The protein resides in the cytoplasm. The enzyme catalyses [ThiI sulfur-carrier protein]-S-sulfanyl-L-cysteine + a uridine in tRNA + 2 reduced [2Fe-2S]-[ferredoxin] + ATP + H(+) = [ThiI sulfur-carrier protein]-L-cysteine + a 4-thiouridine in tRNA + 2 oxidized [2Fe-2S]-[ferredoxin] + AMP + diphosphate. It catalyses the reaction [ThiS sulfur-carrier protein]-C-terminal Gly-Gly-AMP + S-sulfanyl-L-cysteinyl-[cysteine desulfurase] + AH2 = [ThiS sulfur-carrier protein]-C-terminal-Gly-aminoethanethioate + L-cysteinyl-[cysteine desulfurase] + A + AMP + 2 H(+). Its pathway is cofactor biosynthesis; thiamine diphosphate biosynthesis. Its function is as follows. Catalyzes the ATP-dependent transfer of a sulfur to tRNA to produce 4-thiouridine in position 8 of tRNAs, which functions as a near-UV photosensor. Also catalyzes the transfer of sulfur to the sulfur carrier protein ThiS, forming ThiS-thiocarboxylate. This is a step in the synthesis of thiazole, in the thiamine biosynthesis pathway. The sulfur is donated as persulfide by IscS. The protein is tRNA sulfurtransferase of Vibrio vulnificus (strain YJ016).